Consider the following 471-residue polypeptide: Cytolysin (471 aa).

Residues 1–20 (MKKMTLFTLSLLATAVQVGA) form the signal peptide. The region spanning 338–465 (AHVTLQSLSN…EANQARWKPT (128 aa)) is the Ricin B-type lectin domain.

The protein belongs to the HlyA hemolysin family.

In terms of biological role, bacterial hemolysins are exotoxins that attack blood cell membranes and cause cell rupture by mechanisms not clearly defined. The protein is Cytolysin (vvhA) of Vibrio vulnificus (strain CMCP6).